Consider the following 194-residue polypeptide: Putative manganese efflux pump MntP (194 aa).

Transmembrane regions (helical) follow at residues L8–L28, M36–L56, F61–G81, M109–I129, P138–I158, and L172–F192.

This sequence belongs to the MntP (TC 9.B.29) family.

It is found in the cell inner membrane. Its function is as follows. Probably functions as a manganese efflux pump. The sequence is that of Putative manganese efflux pump MntP from Bacteroides fragilis (strain ATCC 25285 / DSM 2151 / CCUG 4856 / JCM 11019 / LMG 10263 / NCTC 9343 / Onslow / VPI 2553 / EN-2).